Here is a 390-residue protein sequence, read N- to C-terminus: Alanine racemase (390 aa).

The active-site Proton acceptor; specific for D-alanine is Lys-37. Residue Lys-37 is modified to N6-(pyridoxal phosphate)lysine. Position 135 (Arg-135) interacts with substrate. Tyr-274 acts as the Proton acceptor; specific for L-alanine in catalysis. Met-322 is a substrate binding site.

This sequence belongs to the alanine racemase family. Pyridoxal 5'-phosphate serves as cofactor.

It catalyses the reaction L-alanine = D-alanine. Its pathway is amino-acid biosynthesis; D-alanine biosynthesis; D-alanine from L-alanine: step 1/1. Functionally, catalyzes the interconversion of L-alanine and D-alanine. May also act on other amino acids. This chain is Alanine racemase (alr), found in Desulfosudis oleivorans (strain DSM 6200 / JCM 39069 / Hxd3) (Desulfococcus oleovorans).